A 77-amino-acid polypeptide reads, in one-letter code: DNA-directed RNA polymerase subunit epsilon (77 aa).

This sequence belongs to the RNA polymerase subunit epsilon family. RNAP is composed of a core of 2 alpha, a beta and a beta' subunit. The core is associated with a delta subunit, and at least one of epsilon or omega. When a sigma factor is associated with the core the holoenzyme is formed, which can initiate transcription.

The catalysed reaction is RNA(n) + a ribonucleoside 5'-triphosphate = RNA(n+1) + diphosphate. In terms of biological role, a non-essential component of RNA polymerase (RNAP). The protein is DNA-directed RNA polymerase subunit epsilon of Streptococcus pneumoniae serotype 19F (strain G54).